The sequence spans 302 residues: Hydra actinoporin-like toxin 4 (302 aa).

The signal sequence occupies residues 1 to 17; sequence MLLFKLIVCFFFIFAIG. Residues 22–93 form a disordered region; that stretch reads KKDETSGENE…PAPKQTTTKK (72 aa). Residues 60 to 75 are compositionally biased toward low complexity; that stretch reads KPPAAKPPAASKITKP. Residues 76–86 show a composition bias toward pro residues; that stretch reads QVPPQKKPPAP. The short motif at 274–276 is the Cell attachment site element; the sequence is KAG.

It belongs to the actinoporin family. HALT subfamily. Octamer or nonamer in membranes. Monomer in the soluble state. In vitro, interacts with folate receptor alpha (of target organism).

Its subcellular location is the nematocyst. It is found in the secreted. It localises to the target cell membrane. Its function is as follows. Pore-forming protein that forms hydrophilic pores and causes cytolysis. Compared to equinatoxin-2 (AC P61914), it reveals lower cytolysis activity (5-12-fold difference, tested on erythrocytes), a larger pore size (probably 2-3 nm) and different affinity to membrane lipids (100-fold lower affinity to sphingomyelin). Binds to sulfatides. Shows cytolytic activity on HeLa cells, with a different potency than its paralogs (from most potent to less potent: HALT-4&gt;HALT-6~HALT-1&gt;HALT-3&gt;HALT-7&gt;HALT-2). This recombinant protein has the highest cytolytic activity compared to other rHALT proteins, probably due to its longer N-terminal sequence that may penetrate the lipid bilayer more effectively. Pore formation is a multi-step process that involves specific recognition of membrane lipid by a protein aromatic residues rich region, firm binding to the membrane (mainly driven by hydrophobic interactions) accompanied by the transfer of the N-terminal region to the lipid-water interface and finally pore formation after oligomerization of monomers. In vitro, binds to the folate receptor alpha (FOLR1), a GPI-anchored membrane protein that plays a major role in the uptake of folate/folic acid into cells via endocytosis, suggesting a possible involvement of this receptor in the mechanism of HALT-1-induced cell lysis. In vivo, does not cause visible paralysis in larvae of the blowfly Sarcophaga faculata, the most common arthropod prey of Hydra. This is Hydra actinoporin-like toxin 4 from Hydra vulgaris (Hydra).